Reading from the N-terminus, the 846-residue chain is Pseudolaratriene synthase, chloroplastic (846 aa).

A chloroplast-targeting transit peptide spans 1-58; the sequence is MSRFTSATHGLNLSIKMPISVSQVPSIRSNTSKYELQKLRSTGRSVLQTRRQLAIINM. Residues Asp595, Asp599, and Asp747 each contribute to the Mg(2+) site. The DDXXD motif motif lies at 595–599; it reads DDIYD.

This sequence belongs to the terpene synthase family. The cofactor is Mg(2+). As to expression, expressed in young and mature roots. Expressed at low levels in barks.

The protein resides in the plastid. It is found in the chloroplast. It catalyses the reaction (2E,6E,10E)-geranylgeranyl diphosphate = pseudolaratriene + diphosphate. The protein operates within terpene metabolism. Its function is as follows. Converts geranylgeranyl diphosphate to an new 5,7-fused bicyclic diterpene, named pseudolaratriene. Catalyzes the first committed step in pseudolaric acid B (PAB) biosynthesis. PAB exhibits antiproliferative activity by inhibiting microtubule polymerization, and has demonstrated antitumor properties against several cancer types. This Pseudolarix amabilis (Golden larch) protein is Pseudolaratriene synthase, chloroplastic.